The primary structure comprises 190 residues: ITAGSSLAGTTLSGLAASGYRVTCAIQVENWTRYPLLYPTVRVNYNGAVTVNPSPILPGKKEGFSVRKPSGTATGVSGTVSWELSGAHRRFVLMWSAPFNFDHYSNWMGVGLTQPGVTRVPPGKAWFDLMYYGPTDCKGELRYERGEFYYTIDPVIYRDENFEIVGTMTNVHNALIKVVIRPTRKNWKDL.

Residues 2-21 (TAGSSLAGTTLSGLAASGYR) form an N-terminal region region. Phosphocholine is bound by residues Gly-78, Ser-96, Pro-98, Tyr-131, and Tyr-132. Positions 138–140 (KGE) match the Cell attachment site, crucial for protein stability motif.

This sequence belongs to the actinoporin family. Conoidea subfamily. In terms of assembly, octamer or nonamer in membranes. Monomer in the soluble state. Expressed by the venom duct.

It localises to the secreted. Its subcellular location is the nematocyst. It is found in the target cell membrane. Pore-forming protein that forms pores of around 1 nm and causes cardiac stimulation and cytolysis. In Terebra anilis (Auger snail), this protein is Tereporin-Ca1.